Here is a 243-residue protein sequence, read N- to C-terminus: NAD-dependent protein deacylase (243 aa).

Residues 1–234 (MYQHIVVLTG…PKLVDTILAG (234 aa)) form the Deacetylase sirtuin-type domain. 10 to 29 (GAGISAESGLRTFRDQDGLW) contacts NAD(+). Positions 54 and 57 each coordinate substrate. 91 to 94 (QNID) contacts NAD(+). The active-site Proton acceptor is histidine 109. Zn(2+)-binding residues include cysteine 117 and cysteine 136. Residues 176–178 (GTS), 202–204 (NLQ), and alanine 220 each bind NAD(+).

Belongs to the sirtuin family. Class III subfamily. It depends on Zn(2+) as a cofactor.

The protein resides in the cytoplasm. The enzyme catalyses N(6)-acetyl-L-lysyl-[protein] + NAD(+) + H2O = 2''-O-acetyl-ADP-D-ribose + nicotinamide + L-lysyl-[protein]. It catalyses the reaction N(6)-succinyl-L-lysyl-[protein] + NAD(+) + H2O = 2''-O-succinyl-ADP-D-ribose + nicotinamide + L-lysyl-[protein]. In terms of biological role, NAD-dependent lysine deacetylase and desuccinylase that specifically removes acetyl and succinyl groups on target proteins. Modulates the activities of several proteins which are inactive in their acylated form. The chain is NAD-dependent protein deacylase from Shewanella oneidensis (strain ATCC 700550 / JCM 31522 / CIP 106686 / LMG 19005 / NCIMB 14063 / MR-1).